The sequence spans 580 residues: Rap guanine nucleotide exchange factor 5 (580 aa).

The N-terminal Ras-GEF domain maps to 68 to 201 (DRYVVVSGTP…ELKEFQKILG (134 aa)). The Ras-GEF domain maps to 345–579 (NTWDLALELM…FELSHRIEPR (235 aa)).

Widely expressed with highest levels in brain.

It localises to the nucleus. In terms of biological role, guanine nucleotide exchange factor (GEF) for RAP1A, RAP2A and MRAS/M-Ras-GTP. Its association with MRAS inhibits Rap1 activation. This chain is Rap guanine nucleotide exchange factor 5 (RAPGEF5), found in Homo sapiens (Human).